The following is a 479-amino-acid chain: MDYHSPYFFGYLLGLIHLLGIVAALHAVFTVRTAQGAIAWAMPLFFIPYLTLIPYLVFGARSFYAYIKARRQANHEMHVAMANLNWRPWVEEALTARESESYAALRAMPKLSRMPCLANNQVKLLINGQATFDAIFAAIEKARDVVLVQFFIIHDDTLGKALQQLLLRKAAEGVQVFVLYDRVGSHALPASYSQVLRDGGVQIHAFATRRGWFNRFQVNFRNHRKIVVVDGLVGFIGGHNVGDEYLGKHPQLSPWRDTHVQISGPVLACLQESFAEDWYWATRQLPPLILPDAYPDNGVLCQALASGPADPQETCSLFFLEAIHSATRRVWITSPYFIPDEAVFAALRLAVLRGVDVRVLIPSRPDHRIVYAASSLFAFEAVRAGVRVFRYQPGFLHQKVVLVDDDVSAIGSANLDNRSFRLNFEITLLTVDRSFADQVEHMLNDDFEQAREITAEDSRDTHRLQQLGMRIARLISPIL.

2 consecutive transmembrane segments (helical) span residues 8–28 and 38–58; these read FFGY…LHAV and IAWA…YLVF. PLD phosphodiesterase domains lie at 218–245 and 392–419; these read VNFR…GDEY and QPGF…DNRS. Catalysis depends on residues His-223, Lys-225, Asp-230, His-397, Lys-399, and Asp-404.

Belongs to the phospholipase D family. Cardiolipin synthase subfamily. ClsA sub-subfamily.

Its subcellular location is the cell inner membrane. The catalysed reaction is 2 a 1,2-diacyl-sn-glycero-3-phospho-(1'-sn-glycerol) = a cardiolipin + glycerol. In terms of biological role, catalyzes the reversible phosphatidyl group transfer from one phosphatidylglycerol molecule to another to form cardiolipin (CL) (diphosphatidylglycerol) and glycerol. The polypeptide is Cardiolipin synthase A (Pseudomonas putida (strain GB-1)).